The chain runs to 512 residues: Pantothenate transporter FEN2 (512 aa).

Over 1-27 the chain is Cytoplasmic; it reads MMKESKSITQHEVERESVSSKRAIKKR. The chain crosses the membrane as a helical span at residues 28 to 48; that stretch reads LLLFKIDLFVLSFVCLQYWIN. The Extracellular segment spans residues 49–79; it reads YVDRVGFTNAYISGMKEDLKMVGNDLTVSNT. A helical transmembrane segment spans residues 80 to 100; that stretch reads VFMIGYIVGMVPNNLMLLCVP. Over 101 to 102 the chain is Cytoplasmic; it reads PR. The helical transmembrane segment at 103 to 123 threads the bilayer; that stretch reads IWLSFCTFAWGLLTLGMYKVT. Residues 124 to 132 are Extracellular-facing; it reads SFKHICAIR. The chain crosses the membrane as a helical span at residues 133–153; it reads FFQALFESCTFSGTHFVLGSW. At 154–164 the chain is on the cytoplasmic side; it reads YKEDELPIRSA. Residues 165–185 form a helical membrane-spanning segment; sequence IFTGSGLVGSMFSGFMQTSIF. Topologically, residues 186–198 are extracellular; the sequence is THLNGRNGLAGWR. A helical membrane pass occupies residues 199 to 219; that stretch reads WLFIIDFCITLPIAIYGFIFF. Residues 220–271 are Cytoplasmic-facing; sequence PGLPDQTSAVSKFSMTRYIFNEQELHYARRRLPARDESTRLDWSTIPRVLKR. A helical membrane pass occupies residues 272-292; sequence WHWWMFSLVWVLGGENLGFAS. At 293 to 312 the chain is on the extracellular side; that stretch reads NSTFALWLQNQKYTLAQRNN. A helical membrane pass occupies residues 313-333; it reads YPSGIFAVGIVSTLCSAVYMS. Residues 334-342 are Cytoplasmic-facing; sequence KIPRARHWH. A helical transmembrane segment spans residues 343-363; it reads VSVFISLVMVIVAVLIRADPL. Residues 364–372 are Extracellular-facing; that stretch reads NPKVVFSAQ. Residues 373–393 form a helical membrane-spanning segment; that stretch reads YLGGVAYAGQAVFFSWANIIC. Over 394-401 the chain is Cytoplasmic; that stretch reads HADLQERA. A helical membrane pass occupies residues 402 to 422; sequence IVLASMNMFSGAVNAWWSILF. The Extracellular portion of the chain corresponds to 423-434; it reads FASDMVPKFERG. Residues 435-455 traverse the membrane as a helical segment; sequence CYALLATAISSGIVSVVIRSL. Topologically, residues 456 to 512 are cytoplasmic; the sequence is QIKENLSKKQVPYIDANDMPGEDDDDDNQDNENDGDDESMEVELHNEEMAEISNPFR. Residues 468–512 are disordered; sequence YIDANDMPGEDDDDDNQDNENDGDDESMEVELHNEEMAEISNPFR. The segment covering 475 to 496 has biased composition (acidic residues); the sequence is PGEDDDDDNQDNENDGDDESME.

This sequence belongs to the major facilitator superfamily. Allantoate permease family.

It localises to the cell membrane. Functionally, transports pantothenate into the cell. Also involved in the catabolite repression-mediated regulation of ergosterol biosynthesis and in fenpropimorph resistance. This is Pantothenate transporter FEN2 (FEN2) from Saccharomyces cerevisiae (strain ATCC 204508 / S288c) (Baker's yeast).